Consider the following 629-residue polypeptide: 1-deoxy-D-xylulose-5-phosphate synthase (629 aa).

Thiamine diphosphate is bound by residues His72 and 113 to 115 (GHS). A Mg(2+)-binding site is contributed by Asp144. Residues 145-146 (GA), Asn173, Tyr284, and Glu366 each bind thiamine diphosphate. A Mg(2+)-binding site is contributed by Asn173.

The protein belongs to the transketolase family. DXPS subfamily. As to quaternary structure, homodimer. Requires Mg(2+) as cofactor. The cofactor is thiamine diphosphate.

It carries out the reaction D-glyceraldehyde 3-phosphate + pyruvate + H(+) = 1-deoxy-D-xylulose 5-phosphate + CO2. It participates in metabolic intermediate biosynthesis; 1-deoxy-D-xylulose 5-phosphate biosynthesis; 1-deoxy-D-xylulose 5-phosphate from D-glyceraldehyde 3-phosphate and pyruvate: step 1/1. Catalyzes the acyloin condensation reaction between C atoms 2 and 3 of pyruvate and glyceraldehyde 3-phosphate to yield 1-deoxy-D-xylulose-5-phosphate (DXP). In Halalkalibacterium halodurans (strain ATCC BAA-125 / DSM 18197 / FERM 7344 / JCM 9153 / C-125) (Bacillus halodurans), this protein is 1-deoxy-D-xylulose-5-phosphate synthase.